The following is a 631-amino-acid chain: Chaperone protein HtpG (631 aa).

The tract at residues 1–339 is a; substrate-binding; it reads MSAQKETLGF…SNDLPLNVSR (339 aa). Positions 340 to 556 are b; it reads EILQESKDID…EHDMSAHLER (217 aa). A c region spans residues 557 to 631; it reads MLKAAGQKIE…INKLMLELSV (75 aa).

This sequence belongs to the heat shock protein 90 family. As to quaternary structure, homodimer.

It localises to the cytoplasm. Functionally, molecular chaperone. Has ATPase activity. This chain is Chaperone protein HtpG, found in Chromobacterium violaceum (strain ATCC 12472 / DSM 30191 / JCM 1249 / CCUG 213 / NBRC 12614 / NCIMB 9131 / NCTC 9757 / MK).